The chain runs to 125 residues: Cu-Zn superoxide dismutase-like protein (125 aa).

A disulfide bond links Cys-52 and Cys-102.

Belongs to the Cu-Zn superoxide dismutase family.

Its subcellular location is the host cytoplasm. Functionally, virion protein with no enzymatic activity. The polypeptide is Cu-Zn superoxide dismutase-like protein (Bos taurus (Bovine)).